We begin with the raw amino-acid sequence, 96 residues long: Large ribosomal subunit protein eL14 (96 aa).

It belongs to the eukaryotic ribosomal protein eL14 family.

This Saccharolobus solfataricus (strain ATCC 35092 / DSM 1617 / JCM 11322 / P2) (Sulfolobus solfataricus) protein is Large ribosomal subunit protein eL14.